The sequence spans 335 residues: Tryptophan--tRNA ligase (335 aa).

Residues 11–13 and 19–20 each bind ATP; these read QPT and GN. The 'HIGH' region motif lies at 12 to 20; that stretch reads PTGNLHLGN. L-tryptophan is bound at residue Asp-135. ATP contacts are provided by residues 147 to 149, Val-189, and 198 to 202; these read GED and KMSKS. Residues 198-202 carry the 'KMSKS' region motif; that stretch reads KMSKS.

It belongs to the class-I aminoacyl-tRNA synthetase family. In terms of assembly, homodimer.

The protein localises to the cytoplasm. The enzyme catalyses tRNA(Trp) + L-tryptophan + ATP = L-tryptophyl-tRNA(Trp) + AMP + diphosphate + H(+). Its function is as follows. Catalyzes the attachment of tryptophan to tRNA(Trp). The protein is Tryptophan--tRNA ligase of Nostoc sp. (strain PCC 7120 / SAG 25.82 / UTEX 2576).